Consider the following 315-residue polypeptide: Small ribosomal subunit biogenesis GTPase RsgA (315 aa).

Residues 79–243 (LSKESHILGA…LIDTPGIKGF (165 aa)) enclose the CP-type G domain. GTP contacts are provided by residues 128–131 (NKID) and 182–190 (GHSGVGKSS). Residues Cys267, Cys272, His274, and Cys280 each coordinate Zn(2+).

This sequence belongs to the TRAFAC class YlqF/YawG GTPase family. RsgA subfamily. In terms of assembly, monomer. Associates with 30S ribosomal subunit, binds 16S rRNA. Zn(2+) is required as a cofactor.

The protein localises to the cytoplasm. One of several proteins that assist in the late maturation steps of the functional core of the 30S ribosomal subunit. Helps release RbfA from mature subunits. May play a role in the assembly of ribosomal proteins into the subunit. Circularly permuted GTPase that catalyzes slow GTP hydrolysis, GTPase activity is stimulated by the 30S ribosomal subunit. The sequence is that of Small ribosomal subunit biogenesis GTPase RsgA from Porphyromonas gingivalis (strain ATCC 33277 / DSM 20709 / CIP 103683 / JCM 12257 / NCTC 11834 / 2561).